The sequence spans 466 residues: Alpha-1,3-mannosyltransferase CMT1 (466 aa).

The interval 1-23 (MFRNTLRTFPRPATPSLPTSSHS) is disordered. At 1-33 (MFRNTLRTFPRPATPSLPTSSHSPIARASLSKS) the chain is on the cytoplasmic side. A helical; Signal-anchor for type II membrane protein transmembrane segment spans residues 34–54 (PLFVLSLVLVCIFFLSFLSHP). The Lumenal portion of the chain corresponds to 55–466 (DPSARKLQWP…ETRWVQPWLE (412 aa)).

Requires Mg(2+) as cofactor. The cofactor is Mn(2+). Co(2+) is required as a cofactor.

It localises to the golgi apparatus membrane. It functions in the pathway protein modification; protein glycosylation. Functionally, responsible for addition of mannose residues in an alpha-1,3 linkage to a polymannosly precursor. May be involved in synthesis of capsule glucuronoxylomannan. The protein is Alpha-1,3-mannosyltransferase CMT1 of Cryptococcus neoformans var. neoformans serotype D (strain JEC21 / ATCC MYA-565) (Filobasidiella neoformans).